The chain runs to 384 residues: Deoxyguanosinetriphosphate triphosphohydrolase-like protein (384 aa).

The segment at 13 to 42 (LASYASDPSKTRGRRHSEPPPENRTEFQRD) is disordered. Residues 28-42 (HSEPPPENRTEFQRD) show a composition bias toward basic and acidic residues. Positions 73–208 (RLTHSLEVAQ…ANLADEVAYN (136 aa)) constitute an HD domain.

The protein belongs to the dGTPase family. Type 2 subfamily.

In Bordetella bronchiseptica (strain ATCC BAA-588 / NCTC 13252 / RB50) (Alcaligenes bronchisepticus), this protein is Deoxyguanosinetriphosphate triphosphohydrolase-like protein.